The primary structure comprises 86 residues: Defensin-like SRCA-homolog protein (86 aa).

Residues 1–26 (MRCVVLFMVSCLLIVLLINHFEEVEA) form the signal peptide. Cystine bridges form between C32–C84, C42–C70, C52–C79, and C68–C81.

The protein belongs to the DEFL family.

The protein localises to the secreted. In terms of biological role, involved in male-mediated self-incompatibility. The chain is Defensin-like SRCA-homolog protein (SCR37) from Arabidopsis lyrata (Lyre-leaved rock-cress).